Reading from the N-terminus, the 206-residue chain is Thymidylate kinase (206 aa).

Gly11–Thr18 is a binding site for ATP.

The protein belongs to the thymidylate kinase family.

It carries out the reaction dTMP + ATP = dTDP + ADP. In terms of biological role, phosphorylation of dTMP to form dTDP in both de novo and salvage pathways of dTTP synthesis. This Burkholderia thailandensis (strain ATCC 700388 / DSM 13276 / CCUG 48851 / CIP 106301 / E264) protein is Thymidylate kinase.